The sequence spans 208 residues: MKNFLQQINSYIKEAFNAGKYLYNGFSVTFDHLRRRPVTVQYPYEKLIPSERYRGRIHYEFDKCIACEVCVRVCPINLPVVDWVMNKETKKKELRNYSIDFGVCIFCGNCVEYCPTNCLSMTEEYELATFDRHNLNFDNVALGRLPTNVTTDPSVKPLRELAYLPKGVMDPHEVPSSDTRVGKLPEEVYDWMRSESNEKKDKASNPNN.

4Fe-4S ferredoxin-type domains follow at residues 55–84 and 95–124; these read GRIH…VDWV and RNYS…MTEE. [4Fe-4S] cluster is bound by residues C64, C67, C70, C74, C104, C107, C110, and C114.

This sequence belongs to the complex I 23 kDa subunit family. As to quaternary structure, NDH-1 is composed of at least 11 different subunits. Requires [4Fe-4S] cluster as cofactor.

It localises to the cellular thylakoid membrane. It catalyses the reaction a plastoquinone + NADH + (n+1) H(+)(in) = a plastoquinol + NAD(+) + n H(+)(out). It carries out the reaction a plastoquinone + NADPH + (n+1) H(+)(in) = a plastoquinol + NADP(+) + n H(+)(out). Functionally, NDH-1 shuttles electrons from an unknown electron donor, via FMN and iron-sulfur (Fe-S) centers, to quinones in the respiratory and/or the photosynthetic chain. The immediate electron acceptor for the enzyme in this species is believed to be plastoquinone. Couples the redox reaction to proton translocation, and thus conserves the redox energy in a proton gradient. This is NAD(P)H-quinone oxidoreductase subunit I from Prochlorococcus marinus (strain MIT 9301).